A 209-amino-acid polypeptide reads, in one-letter code: 2,3-bisphosphoglycerate-dependent phosphoglycerate mutase (209 aa).

Substrate-binding positions include R8–N15, T21–G22, R60, E87–Y90, K98, R114–R115, and G158–N159. Catalysis depends on H9, which acts as the Tele-phosphohistidine intermediate. E87 functions as the Proton donor/acceptor in the catalytic mechanism.

This sequence belongs to the phosphoglycerate mutase family. BPG-dependent PGAM subfamily. Homodimer.

The enzyme catalyses (2R)-2-phosphoglycerate = (2R)-3-phosphoglycerate. Its pathway is carbohydrate degradation; glycolysis; pyruvate from D-glyceraldehyde 3-phosphate: step 3/5. Functionally, catalyzes the interconversion of 2-phosphoglycerate and 3-phosphoglycerate. The protein is 2,3-bisphosphoglycerate-dependent phosphoglycerate mutase of Rhizobium etli (strain ATCC 51251 / DSM 11541 / JCM 21823 / NBRC 15573 / CFN 42).